The primary structure comprises 1543 residues: Tubby-related protein 4 (1543 aa).

WD repeat units follow at residues Glu-6–Gln-72, Arg-73–Arg-115, Trp-116–Arg-158, His-159–Tyr-237, Ala-238–Leu-276, Ser-277–Ile-334, and Phe-335–His-372. The region spanning Ala-364–Pro-414 is the SOCS box domain. Disordered regions lie at residues Ser-530–Ser-577 and Thr-829–Pro-850. Residue Ser-577 is modified to Phosphoserine. Arg-945 and Arg-950 each carry asymmetric dimethylarginine. Disordered stretches follow at residues Ser-1004 to Ser-1058, Val-1326 to Glu-1355, and Asp-1367 to Lys-1453. Polar residues predominate over residues Thr-1036 to Gly-1050. The span at Arg-1329–Glu-1347 shows a compositional bias: basic and acidic residues. Residues Ser-1343 and Ser-1374 each carry the phosphoserine modification. Basic and acidic residues predominate over residues Glu-1443–Lys-1453. Residues Val-1466–Lys-1543 are TUB.

This sequence belongs to the TUB family. As to expression, expressed mainly in the brain, skeletal muscle, testis and kidney.

It localises to the cytoplasm. It functions in the pathway protein modification; protein ubiquitination. Functionally, may be a substrate-recognition component of a SCF-like ECS (Elongin-Cullin-SOCS-box protein) E3 ubiquitin ligase complex which mediates the ubiquitination and subsequent proteasomal degradation of target proteins. The protein is Tubby-related protein 4 (TULP4) of Homo sapiens (Human).